A 434-amino-acid chain; its full sequence is Trigger factor (434 aa).

One can recognise a PPIase FKBP-type domain in the interval 160–245 (GDKVKMNFVG…LTEVLAANLP (86 aa)).

The protein belongs to the FKBP-type PPIase family. Tig subfamily.

The protein localises to the cytoplasm. The enzyme catalyses [protein]-peptidylproline (omega=180) = [protein]-peptidylproline (omega=0). Involved in protein export. Acts as a chaperone by maintaining the newly synthesized protein in an open conformation. Functions as a peptidyl-prolyl cis-trans isomerase. This Shewanella sp. (strain MR-4) protein is Trigger factor.